Reading from the N-terminus, the 384-residue chain is 5-amino-6-(D-ribitylamino)uracil--L-tyrosine 4-hydroxyphenyl transferase 2 (384 aa).

The Radical SAM core domain occupies Val53–Thr286. Positions 67, 71, and 74 each coordinate [4Fe-4S] cluster.

Belongs to the radical SAM superfamily. CofH family. In terms of assembly, consists of two subunits, CofG and CofH. [4Fe-4S] cluster is required as a cofactor.

The enzyme catalyses 5-amino-6-(D-ribitylamino)uracil + L-tyrosine + S-adenosyl-L-methionine = 5-amino-5-(4-hydroxybenzyl)-6-(D-ribitylimino)-5,6-dihydrouracil + 2-iminoacetate + 5'-deoxyadenosine + L-methionine + H(+). The protein operates within cofactor biosynthesis; coenzyme F0 biosynthesis. Functionally, catalyzes the radical-mediated synthesis of 5-amino-5-(4-hydroxybenzyl)-6-(D-ribitylimino)-5,6-dihydrouracil from 5-amino-6-(D-ribitylamino)uracil and L-tyrosine. The polypeptide is 5-amino-6-(D-ribitylamino)uracil--L-tyrosine 4-hydroxyphenyl transferase 2 (Methanosarcina acetivorans (strain ATCC 35395 / DSM 2834 / JCM 12185 / C2A)).